The primary structure comprises 336 residues: DNA-directed RNA polymerase subunit alpha (336 aa).

An alpha N-terminal domain (alpha-NTD) region spans residues Met1–Asp232. Residues Phe248–Tyr336 are alpha C-terminal domain (alpha-CTD).

The protein belongs to the RNA polymerase alpha chain family. In terms of assembly, homodimer. The RNAP catalytic core consists of 2 alpha, 1 beta, 1 beta' and 1 omega subunit. When a sigma factor is associated with the core the holoenzyme is formed, which can initiate transcription.

The catalysed reaction is RNA(n) + a ribonucleoside 5'-triphosphate = RNA(n+1) + diphosphate. In terms of biological role, DNA-dependent RNA polymerase catalyzes the transcription of DNA into RNA using the four ribonucleoside triphosphates as substrates. The polypeptide is DNA-directed RNA polymerase subunit alpha (Rhizobium etli (strain CIAT 652)).